The primary structure comprises 367 residues: Glycolate oxidase 1 (367 aa).

The residue at position 1 (methionine 1) is an N-acetylmethionine. Glyoxylate is bound at residue tyrosine 24. FMN-binding positions include 77-79 (PTA), serine 106, 127-129 (QLY), and threonine 155. Tyrosine 129 contributes to the glyoxylate binding site. Arginine 164 contributes to the glyoxylate binding site. Positions 230 and 252 each coordinate FMN. Residues histidine 254 and arginine 257 each coordinate glyoxylate. The active-site Proton acceptor is the histidine 254. FMN-binding positions include 285-289 (DGGVR) and 308-309 (GR).

Belongs to the FMN-dependent alpha-hydroxy acid dehydrogenase family. Homotetramer. The cofactor is FMN.

It is found in the peroxisome. The catalysed reaction is glycolate + O2 = glyoxylate + H2O2. The protein operates within photosynthesis; photorespiration; glycine from 2-phosphoglycolate: step 2/3. Its function is as follows. Catalyzes the oxidation of glycolate to glyoxylate, with a reduction of O2 to H2O2. Is a key enzyme in photorespiration in green plants. The protein is Glycolate oxidase 1 (GLO1) of Arabidopsis thaliana (Mouse-ear cress).